We begin with the raw amino-acid sequence, 183 residues long: Gamma-crystallin N-A (183 aa).

4 Beta/gamma crystallin 'Greek key' domains span residues 6-46 (GKIV…RVES), 47-89 (GAWV…KPIK), 95-136 (YRME…KVYG), and 138-180 (GAWA…RRVV).

This sequence belongs to the beta/gamma-crystallin family. As to quaternary structure, monomer.

In terms of biological role, crystallins are the dominant structural components of the vertebrate eye lens. The polypeptide is Gamma-crystallin N-A (crygna) (Danio rerio (Zebrafish)).